The chain runs to 314 residues: ATP synthase gamma chain (314 aa).

It belongs to the ATPase gamma chain family. In terms of assembly, F-type ATPases have 2 components, CF(1) - the catalytic core - and CF(0) - the membrane proton channel. CF(1) has five subunits: alpha(3), beta(3), gamma(1), delta(1), epsilon(1). CF(0) has three main subunits: a, b and c.

The protein localises to the cellular thylakoid membrane. Functionally, produces ATP from ADP in the presence of a proton gradient across the membrane. The gamma chain is believed to be important in regulating ATPase activity and the flow of protons through the CF(0) complex. This is ATP synthase gamma chain from Synechococcus sp. (strain JA-3-3Ab) (Cyanobacteria bacterium Yellowstone A-Prime).